Consider the following 89-residue polypeptide: ATP synthase subunit H, mitochondrial (89 aa).

As to quaternary structure, F-type ATP synthases have 2 components, the catalytic core F(1) and the membrane-embedded component F(0), linked together by a central stalk and a peripheral stalk. The central stalk, also called rotor shaft, is often seen as part of F(1). The peripheral stalk is seen as part of F(0). F(0) contains the membrane channel next to the rotor. F-type ATP synthases form dimers but each monomer functions independently in ATP generation. The dimer consists of 18 different polypeptides: ATP1 (subunit alpha, part of F(1), 3 molecules per monomer), ATP2 (subunit beta, part of F(1), 3 molecules per monomer), ATP3 (subunit gamma, part of the central stalk), ATP4 (subunit b, part of the peripheral stalk), ATP5/OSCP (subunit 5/OSCP, part of the peripheral stalk), ATP6 (subunit a, part of the peripheral stalk), ATP7 (subunit d, part of the peripheral stalk), ATP8 (subunit 8, part of the peripheral stalk), OLI1 (subunit c, part of the rotor, 10 molecules per monomer), ATP14 (subunit H, part of the peripheral stalk), ATP15 (subunit epsilon, part of the central stalk), ATP16 (subunit delta, part of the central stalk), ATP17 (subunit f, part of the peripheral stalk), ATP18 (subunit i/j, part of the peripheral stalk). Dimer-specific subunits are ATP19 (subunit k, at interface between monomers), ATP20 (subunit g, at interface between monomers), TIM11 (subunit e, at interface between monomers). Also contains subunit L.

It is found in the mitochondrion inner membrane. Functionally, mitochondrial membrane ATP synthase (F(1)F(0) ATP synthase or Complex V) produces ATP from ADP in the presence of a proton gradient across the membrane which is generated by electron transport complexes of the respiratory chain. F-type ATP synthases consist of two structural domains, F(1) - containing the extramembraneous catalytic core, and F(0) - containing the membrane proton channel, linked together by a central stalk and a peripheral stalk. During catalysis, ATP synthesis in the catalytic domain of F(1) is coupled via a rotary mechanism of the central stalk subunits to proton translocation. Part of the peripheral stalk. This Pichia angusta (Yeast) protein is ATP synthase subunit H, mitochondrial.